Here is a 343-residue protein sequence, read N- to C-terminus: NAC domain-containing protein 4 (343 aa).

Residues 12 to 168 (LPPGFRFHPT…EWVLCRVFKK (157 aa)) enclose the NAC domain. A DNA-binding region spans residues 109-174 (VGMKKTLVFY…VFKKSLVEVG (66 aa)). Positions 304–333 (GGERERLSASQDTGLTSDVNPEISSSSGQK) are disordered. Polar residues predominate over residues 311 to 332 (SASQDTGLTSDVNPEISSSSGQ).

Expressed in roots, tiller buds, stems, leaves, lamina joints and the young husks. Expressed in embryos, coleoptiles, radicles, leaf pulvinus, ligules, panicles, palea and lemma, anthers, and the internode of the peduncles. Expressed in young leaves, root meristems, florescence meristems and young spikelets.

It is found in the nucleus. In terms of biological role, transcription factor involved in the regulation of tiller bud outgrowth, but does not seem to regulate tiller bud initiation. Possesses transactivation activity in yeast. Involved in the regulation of plant architecture and grain yield. Acts as a negative regulator of plant height and flowering time. Regulates directly key genes of the gibberellin (GA) pathway by binding to their promoters. Positively regulates leaf senescence in an age-dependent manner. Activates directly the expression of the chlorophyll degradation genes SGR and NYC3. Positively regulates the level of abscisic acid (ABA) by directly up-regulating the expression of the ABA biosynthetic genes NCED3 and ZEP, and down-regulating the ABA catabolic gene CYP707A5/ABA8OX1. Promotes salt-induced cell death accompanied by the loss of plasma membrane integrity, nuclear DNA fragmentation, and changes of caspase-like activity. Targets genes that encoded a reactive oxygen species (ROS) scavenger COX11 and a caspase-like protease AP37. Activates the potassium efflux channels GORK and SKOR. Acts as a positive regulator of drought and salt tolerance through ABA-mediated pathways. Acts as a negative regulator of root growth. Functions as an upstream integrator of auxin and cytokinin signals that affect CROWN ROOTLESS (CRL) and cyclin-dependent protein kinase (CDK) genes to regulate cell division during root development. Binds directly to the promoters of the auxin inactivation-related genes GH3.6 and GH3.8, the auxin signaling-related gene ARF25, and the cytokinin oxidase gene CKX4. Activates directly the expressions of the 1-aminocyclopropane-1-carboxylate oxidase genes ACO1 and ACO3, enhancing ethylene synthesis, and then retarding seedling establishment. This Oryza sativa subsp. japonica (Rice) protein is NAC domain-containing protein 4.